Here is a 287-residue protein sequence, read N- to C-terminus: Bifunctional protein FolD (287 aa).

NADP(+) contacts are provided by residues Asn165–Ser167, Ser190, and Ile233.

The protein belongs to the tetrahydrofolate dehydrogenase/cyclohydrolase family. As to quaternary structure, homodimer.

The catalysed reaction is (6R)-5,10-methylene-5,6,7,8-tetrahydrofolate + NADP(+) = (6R)-5,10-methenyltetrahydrofolate + NADPH. It carries out the reaction (6R)-5,10-methenyltetrahydrofolate + H2O = (6R)-10-formyltetrahydrofolate + H(+). The protein operates within one-carbon metabolism; tetrahydrofolate interconversion. In terms of biological role, catalyzes the oxidation of 5,10-methylenetetrahydrofolate to 5,10-methenyltetrahydrofolate and then the hydrolysis of 5,10-methenyltetrahydrofolate to 10-formyltetrahydrofolate. This chain is Bifunctional protein FolD, found in Nitrosopumilus maritimus (strain SCM1).